The sequence spans 30 residues: Cycloviolacin-O24 (30 aa).

Residues 1-30 (GLPTCGETCFGGTCNTPGCTCDPWPVCTHN) constitute a cross-link (cyclopeptide (Gly-Asn)). 3 disulfides stabilise this stretch: cysteine 5/cysteine 19, cysteine 9/cysteine 21, and cysteine 14/cysteine 27.

This is a cyclic peptide. As to expression, expressed in leaves but not in petals, petioles, roots and runners (at protein level).

Its function is as follows. Probably participates in a plant defense mechanism. Has hemolytic activity. This Viola odorata (Sweet violet) protein is Cycloviolacin-O24.